Here is a 657-residue protein sequence, read N- to C-terminus: Putative serine protease (657 aa).

The next 3 membrane-spanning stretches (helical) occupy residues 4 to 24 (YLAT…LLMP), 46 to 62 (WLLT…PSGT), and 109 to 131 (LLSG…VLML). In terms of domain architecture, Peptidase S39 spans 239–434 (QPGSDFVECE…ETDRYARTME (196 aa)). Residues histidine 284, aspartate 318, and serine 386 each act as for protease activity in the active site. The disordered stretch occupies residues 513–605 (PLGGLPISNG…PPSTGSVPKS (93 aa)). Over residues 548-559 (HTRRRRRNKKKS) the composition is skewed to basic residues. Residues 560 to 569 (KNSETGHGPE) show a composition bias toward basic and acidic residues. A compositionally biased stretch (low complexity) spans 571–589 (QSQQQSRPSSPIPDDSAPV).

It belongs to the peptidase S39B family.

Its subcellular location is the host membrane. Its function is as follows. Putative serine protease. The protein is Putative serine protease of Mushroom bacilliform virus (isolate Australia/AUS LF-1) (MBV).